The chain runs to 202 residues: Small ribosomal subunit protein uS4 (202 aa).

Residues 22–43 are disordered; the sequence is TRKSARRAYPPGQHGQNRKKRS. The S4 RNA-binding domain maps to 90–152; sequence MRLDNTVFRL…APSRKLVENN (63 aa).

Belongs to the universal ribosomal protein uS4 family. Part of the 30S ribosomal subunit. Contacts protein S5. The interaction surface between S4 and S5 is involved in control of translational fidelity.

Functionally, one of the primary rRNA binding proteins, it binds directly to 16S rRNA where it nucleates assembly of the body of the 30S subunit. Its function is as follows. With S5 and S12 plays an important role in translational accuracy. This Nostoc sp. (strain PCC 7120 / SAG 25.82 / UTEX 2576) protein is Small ribosomal subunit protein uS4.